The sequence spans 365 residues: Aminomethyltransferase (365 aa).

The protein belongs to the GcvT family. As to quaternary structure, the glycine cleavage system is composed of four proteins: P, T, L and H.

It carries out the reaction N(6)-[(R)-S(8)-aminomethyldihydrolipoyl]-L-lysyl-[protein] + (6S)-5,6,7,8-tetrahydrofolate = N(6)-[(R)-dihydrolipoyl]-L-lysyl-[protein] + (6R)-5,10-methylene-5,6,7,8-tetrahydrofolate + NH4(+). Functionally, the glycine cleavage system catalyzes the degradation of glycine. This chain is Aminomethyltransferase, found in Chlorobium phaeovibrioides (strain DSM 265 / 1930) (Prosthecochloris vibrioformis (strain DSM 265)).